A 138-amino-acid polypeptide reads, in one-letter code: Putative pre-16S rRNA nuclease (138 aa).

This sequence belongs to the YqgF nuclease family.

The protein localises to the cytoplasm. Its function is as follows. Could be a nuclease involved in processing of the 5'-end of pre-16S rRNA. This chain is Putative pre-16S rRNA nuclease, found in Listeria monocytogenes serovar 1/2a (strain ATCC BAA-679 / EGD-e).